We begin with the raw amino-acid sequence, 88 residues long: Small ribosomal subunit protein bS21 (88 aa).

The tract at residues 58 to 88 is disordered; the sequence is ARKRAQREGLLPMTPRPVAAGGAAGAARPPR. A compositionally biased stretch (low complexity) spans 73–88; it reads RPVAAGGAAGAARPPR.

Belongs to the bacterial ribosomal protein bS21 family.

This chain is Small ribosomal subunit protein bS21, found in Mesorhizobium japonicum (strain LMG 29417 / CECT 9101 / MAFF 303099) (Mesorhizobium loti (strain MAFF 303099)).